A 148-amino-acid polypeptide reads, in one-letter code: uncharacterized protein (148 aa).

A helical membrane pass occupies residues 7–29 (MLILMSLVKIVLTCLPTGVIEWL).

Its subcellular location is the membrane. This is an uncharacterized protein from Bacillus subtilis (strain 168).